The primary structure comprises 228 residues: Endonuclease V (228 aa).

Positions 36 and 104 each coordinate Mg(2+).

Belongs to the endonuclease V family. Mg(2+) is required as a cofactor.

It localises to the cytoplasm. The enzyme catalyses Endonucleolytic cleavage at apurinic or apyrimidinic sites to products with a 5'-phosphate.. Functionally, DNA repair enzyme involved in the repair of deaminated bases. Selectively cleaves double-stranded DNA at the second phosphodiester bond 3' to a deoxyinosine leaving behind the intact lesion on the nicked DNA. This chain is Endonuclease V, found in Serratia proteamaculans (strain 568).